A 695-amino-acid polypeptide reads, in one-letter code: Threonine--tRNA ligase 1, cytoplasmic (695 aa).

A disordered region spans residues 1-21; the sequence is MSEEKASSPSGKMDGEKPLNP. In terms of domain architecture, TGS spans 51-115; the sequence is DSKPIKVTLP…ETDCTLELLK (65 aa). N6-acetyllysine is present on Lys-215. The residue at position 218 (Thr-218) is a Phosphothreonine. Residue Tyr-270 is modified to Phosphotyrosine. A Phosphothreonine modification is found at Thr-425.

It belongs to the class-II aminoacyl-tRNA synthetase family. Homodimer. ISGylated.

It is found in the cytoplasm. It carries out the reaction tRNA(Thr) + L-threonine + ATP = L-threonyl-tRNA(Thr) + AMP + diphosphate + H(+). Functionally, catalyzes the attachment of threonine to tRNA(Thr) in a two-step reaction: threonine is first activated by ATP to form Thr-AMP and then transferred to the acceptor end of tRNA(Thr). Also edits incorrectly charged tRNA(Thr) via its editing domain, at the post-transfer stage. The polypeptide is Threonine--tRNA ligase 1, cytoplasmic (Tars1) (Rattus norvegicus (Rat)).